A 232-amino-acid chain; its full sequence is Anti-sigma-K factor RskA (232 aa).

The Cytoplasmic segment spans residues 1–90 (MTEHTDFELL…EVRRQSRWRT (90 aa)). The chain crosses the membrane as a helical span at residues 91–111 (AAFASAAAIAVGLGAFGLGVL). Over 112 to 232 (TRPSPPPTVA…GTILAELPLG (121 aa)) the chain is Extracellular.

It belongs to the anti-sigma-K factor family.

The protein resides in the cell membrane. An anti-sigma factor for extracytoplasmic function (ECF) sigma factor SigK. ECF sigma factors are held in an inactive form by an anti-sigma factor until released by regulated intramembrane proteolysis (RIP). RIP occurs when an extracytoplasmic signal triggers a concerted proteolytic cascade to transmit information and elicit cellular responses. The membrane-spanning regulatory substrate protein is first cut extracytoplasmically (site-1 protease, S1P), then within the membrane itself (site-2 protease, S2P, Rip1), while cytoplasmic proteases finish degrading the regulatory protein, liberating the sigma factor. The chain is Anti-sigma-K factor RskA (rskA) from Mycobacterium tuberculosis (strain ATCC 25177 / H37Ra).